Reading from the N-terminus, the 156-residue chain is E3 ubiquitin-protein ligase RNF181 (156 aa).

An RING-type; atypical zinc finger spans residues 79–120 (CPVCLLEFEEGETVRQLPCEHLFHSSCILPWLGKTNSCPLCR).

This sequence belongs to the RNF181 family.

The enzyme catalyses S-ubiquitinyl-[E2 ubiquitin-conjugating enzyme]-L-cysteine + [acceptor protein]-L-lysine = [E2 ubiquitin-conjugating enzyme]-L-cysteine + N(6)-ubiquitinyl-[acceptor protein]-L-lysine.. It functions in the pathway protein modification; protein ubiquitination. E3 ubiquitin-protein ligase which accepts ubiquitin from an E2 ubiquitin-conjugating enzyme in the form of a thioester and then directly transfers the ubiquitin to targeted substrates. Catalyzes monoubiquitination of 26S proteasome subunit PSMC2/RPT1. This Xenopus tropicalis (Western clawed frog) protein is E3 ubiquitin-protein ligase RNF181 (rnf181).